Here is a 491-residue protein sequence, read N- to C-terminus: MEQPPAPKSKLKKLSEDSLTKQPEEVFDVLEKLGEGSYGSVFKAIHKESGQVVAIKQVPVESDLQEIIKEISIMQQCDSPYVVKYYGSYFKNTDLWIVMEYCGAGSVSDIIRLRNKTLIEDEIATILKSTLKGLEYLHFMRKIHRDIKAGNILLNTEGHAKLADFGVAGQLTDTMAKRNTVIGTPFWMAPEVIQEIGYNCVADIWSLGITSIEMAEGKPPYADIHPMRAIFMIPTNPPPTFRKPELWSDDFTDFVKKCLVKNPEQRATATQLLQHPFIKNAKPVSILRDLITEAMEIKAKRHEEQQRELEEEEENSDEDELDSHTMVKTSVESVGTMRATSTMSEGAQTMIEHNSTMLESDLGTMVINSEDEEEEDGTMKRNATSPQVQRPSFMDYFDKQDFKNKSHENCNQNMHEPFPMSKNVFPDNWKVPQDGDFDFLKNLSLEELQMRLKALDPMMEREIEELRQRYTAKRQPILDAMDAKKRRQQNF.

An N-acetylmethionine modification is found at M1. A Phosphoserine; by PLK1 modification is found at S15. Residues 27 to 278 (FDVLEKLGEG…ATQLLQHPFI (252 aa)) form the Protein kinase domain. Residues 33–41 (LGEGSYGSV) and K56 contribute to the ATP site. T117 carries the phosphothreonine; by PKB/AKT1 modification. D146 functions as the Proton acceptor in the catalytic mechanism. Mg(2+) contacts are provided by N151 and D164. T174 and T180 each carry phosphothreonine; by autocatalysis. A coiled-coil region spans residues 287-328 (LRDLITEAMEIKAKRHEEQQRELEEEEENSDEDELDSHTMVK). Residues 301-327 (RHEEQQRELEEEEENSDEDELDSHTMV) are disordered. Acidic residues predominate over residues 309-321 (LEEEEENSDEDEL). S316 bears the Phosphoserine mark. Residues T336 and T378 each carry the phosphothreonine; by autocatalysis modification. The segment at 370 to 392 (EDEEEEDGTMKRNATSPQVQRPS) is disordered. Polar residues predominate over residues 381 to 390 (RNATSPQVQR). At T384 the chain carries Phosphothreonine; by PKB/AKT1. S385 and S444 each carry phosphoserine. Residues 437–484 (FDFLKNLSLEELQMRLKALDPMMEREIEELRQRYTAKRQPILDAMDAK) form the SARAH domain. Residues 442–475 (NLSLEELQMRLKALDPMMEREIEELRQRYTAKRQ) are a coiled coil.

The protein belongs to the protein kinase superfamily. STE Ser/Thr protein kinase family. STE20 subfamily. Homodimer; mediated via the coiled-coil region. Interacts with NORE1, which inhibits autoactivation. Interacts with and stabilizes SAV1. Interacts with RAF1, which prevents dimerization and phosphorylation. Interacts with RASSF1. Interacts (via SARAH domain) with isoform 1 of NEK2. Interacts with ESR1 only in the presence of SAV1. Interacts with PKB/AKT1. Forms a tripartite complex with MOBKL1B and STK38. Interacts with RASSF2 (via SARAH domain). Interacts with DLG5 (via PDZ domain 3). Interacts with LATS1; this interaction is inhibited in the presence of DLG5. Interacts with MARK3 in the presence of DLG5. Interacts with RASSF5; this interaction inhibits STK3 autoactivation through heterodimerization. Interacts (when phosphorylated) with SLMAP (via FHA domain); the interaction associates STK3 with the STRIPAK complex. Mg(2+) serves as cofactor. Autophosphorylated on two residues Thr-174 and Thr-180, leading to activation. Phosphorylation at Thr-117 and Thr-384 by PKB/AKT1, leads to inhibition of its: cleavage, kinase activity, autophosphorylation at Thr-180, binding to RASSF1 and nuclear translocation, and increase in its binding to RAF1. Phosphorylated at Ser-15 by PLK1, leading to activation. When autophosphorylated at Thr-180, recruits STRIPAK complex and promotes PP2A-mediated dephosphorylation and inactivation of STK3. In terms of processing, proteolytically cleaved by caspase-3 during apoptosis. Proteolytic cleavage results in kinase activation and nuclear translocation of the truncated form (MST1/N). Post-translationally, ubiquitinated by TRIM69; leading to its redistribution to the perinuclear cytoskeleton, where it is phosphorylated by PLK1 and subsequently activated. As to expression, expressed at high levels in adult kidney, skeletal and placenta tissues and at very low levels in adult heart, lung and brain tissues.

It localises to the cytoplasm. Its subcellular location is the nucleus. The protein localises to the cytoskeleton. It is found in the microtubule organizing center. The protein resides in the centrosome. It carries out the reaction L-seryl-[protein] + ATP = O-phospho-L-seryl-[protein] + ADP + H(+). It catalyses the reaction L-threonyl-[protein] + ATP = O-phospho-L-threonyl-[protein] + ADP + H(+). Inhibited by the C-terminal non-catalytic region. Activated by caspase-cleavage. Full activation also requires homodimerization and autophosphorylation of Thr-180, which are inhibited by the proto-oncogene product RAF1. Activated by RASSF1 which acts by preventing its dephosphorylation. When autophosphorylated at Thr-180, recruits STRIPAK complex and promotes PP2A-mediated dephosphorylation and inactivation of STK3. Functionally, stress-activated, pro-apoptotic kinase which, following caspase-cleavage, enters the nucleus and induces chromatin condensation followed by internucleosomal DNA fragmentation. Key component of the Hippo signaling pathway which plays a pivotal role in organ size control and tumor suppression by restricting proliferation and promoting apoptosis. The core of this pathway is composed of a kinase cascade wherein STK3/MST2 and STK4/MST1, in complex with its regulatory protein SAV1, phosphorylates and activates LATS1/2 in complex with its regulatory protein MOB1, which in turn phosphorylates and inactivates YAP1 oncoprotein and WWTR1/TAZ. Phosphorylation of YAP1 by LATS2 inhibits its translocation into the nucleus to regulate cellular genes important for cell proliferation, cell death, and cell migration. STK3/MST2 and STK4/MST1 are required to repress proliferation of mature hepatocytes, to prevent activation of facultative adult liver stem cells (oval cells), and to inhibit tumor formation. Phosphorylates NKX2-1. Phosphorylates NEK2 and plays a role in centrosome disjunction by regulating the localization of NEK2 to centrosome, and its ability to phosphorylate CROCC and CEP250. In conjunction with SAV1, activates the transcriptional activity of ESR1 through the modulation of its phosphorylation. Positively regulates RAF1 activation via suppression of the inhibitory phosphorylation of RAF1 on 'Ser-259'. Phosphorylates MOBKL1A and RASSF2. Phosphorylates MOBKL1B on 'Thr-74'. Acts cooperatively with MOBKL1B to activate STK38. This chain is Serine/threonine-protein kinase 3, found in Homo sapiens (Human).